The primary structure comprises 452 residues: MAAAVSSVWAKPGAWALEAEEHEAELKQQPSPTNQKSSAEDSSDFPSLAAAATTKTKKKKGQTISLAEFATYGTAKAKPAPQTERLTQAELVALPTGPRERSAEELDRSKLGGGFRSYGGGRYGDESSSSRWGSSRVSEDGERRGGGFNRDREPSRDSGPSRADEDDNWAAAKKPISGNGFERRERGSGGGFFESQSQSKADEVDSWVSTKPSEPRRFVSSNGGGGDRFEKRGSFESLSRNRDSQYGGGGGSESDTWGRRREESGAANGSPPPSGGSRPRLVLQPRTLPVAVVEVVKPESPVLVIVEKPKGANPFGNARPREEVLAEKGQDWKEIDEKLEAEKLKDIAAAMEKPNEKSTGKMGFGLGNGRKDEERIERSWRKSTEHSEEDAQEEEPAVEGAKKEETEDKPAVEEAKKEETEGEQAVEEAKKEETGGEPAVEEAKKEETEDKI.

At Ala-2 the chain carries N-acetylalanine. Residues 20–282 (EEHEAELKQQ…PSGGSRPRLV (263 aa)) are disordered. Residues 28–37 (QQPSPTNQKS) are compositionally biased toward polar residues. Over residues 98–110 (PRERSAEELDRSK) the composition is skewed to basic and acidic residues. The segment covering 111-122 (LGGGFRSYGGGR) has biased composition (gly residues). Positions 126–136 (ESSSSRWGSSR) are enriched in low complexity. Positions 137–156 (VSEDGERRGGGFNRDREPSR) are enriched in basic and acidic residues. 2 consecutive short sequence motifs (nuclear localization signal) follow at residues 172 to 179 (AKKPISGN) and 215 to 222 (PRRFVSSN). Positions 227–243 (DRFEKRGSFESLSRNRD) are enriched in basic and acidic residues. A phosphoserine mark is found at Ser-234, Ser-270, and Ser-300. Positions 265–280 (GAANGSPPPSGGSRPR) are enriched in low complexity. The tract at residues 349-452 (AAMEKPNEKS…AKKEETEDKI (104 aa)) is disordered. Residues 369-386 (GRKDEERIERSWRKSTEH) are compositionally biased toward basic and acidic residues. Positions 387-397 (SEEDAQEEEPA) are enriched in acidic residues. Composition is skewed to basic and acidic residues over residues 400–419 (GAKKEETEDKPAVEEAKKEE) and 441–452 (EEAKKEETEDKI).

This sequence belongs to the eIF-4 subunit B family. Homodimer. Nonspherical monomer. mRNA-discriminating component of initiation complexes. Interacts with MAD2. Post-translationally, phosphorylated.

The protein localises to the nucleus. Promotes the eIF4F and eIF4A RNA-dependent ATP-hydrolysis activity with different efficiency depending on mRNAs, thus providing mRNA discrimination during initiation of translation. This chain is Eukaryotic translation initiation factor 4B3, found in Arabidopsis thaliana (Mouse-ear cress).